Reading from the N-terminus, the 356-residue chain is Isocitrate dehydrogenase [NAD] subunit 1, mitochondrial (356 aa).

3 residues coordinate substrate: R106, R137, and D224. D224 lines the Mg(2+) pocket.

It belongs to the isocitrate and isopropylmalate dehydrogenases family. As to quaternary structure, octamer of two non-identical subunits IDH1 and IDH2. Mg(2+) serves as cofactor. The cofactor is Mn(2+).

Its subcellular location is the mitochondrion. It catalyses the reaction D-threo-isocitrate + NAD(+) = 2-oxoglutarate + CO2 + NADH. Functionally, performs an essential role in the oxidative function of the citric acid cycle. Also binds RNA; specifically to the 5'-untranslated leaders of mitochondrial mRNAs. This Schizosaccharomyces pombe (strain 972 / ATCC 24843) (Fission yeast) protein is Isocitrate dehydrogenase [NAD] subunit 1, mitochondrial (idh1).